A 544-amino-acid chain; its full sequence is Cytochrome P450 82A1 (544 aa).

Position 481 (cysteine 481) interacts with heme.

This sequence belongs to the cytochrome P450 family. It depends on heme as a cofactor.

The protein localises to the membrane. This is Cytochrome P450 82A1 (CYP82A1) from Pisum sativum (Garden pea).